The following is a 525-amino-acid chain: GMP synthase [glutamine-hydrolyzing] (525 aa).

Residues 9–207 (KILILDFGSQ…IVDICGCDTL (199 aa)) enclose the Glutamine amidotransferase type-1 domain. Catalysis depends on Cys-86, which acts as the Nucleophile. Catalysis depends on residues His-181 and Glu-183. In terms of domain architecture, GMPS ATP-PPase spans 208–400 (WTPANIAQDA…LGLPYDMVYR (193 aa)). 235–241 (SGGVDSS) lines the ATP pocket.

As to quaternary structure, homodimer.

It catalyses the reaction XMP + L-glutamine + ATP + H2O = GMP + L-glutamate + AMP + diphosphate + 2 H(+). It functions in the pathway purine metabolism; GMP biosynthesis; GMP from XMP (L-Gln route): step 1/1. Catalyzes the synthesis of GMP from XMP. This is GMP synthase [glutamine-hydrolyzing] from Marinomonas sp. (strain MWYL1).